The chain runs to 279 residues: Tryptophan synthase alpha chain (279 aa).

Catalysis depends on proton acceptor residues Glu-63 and Asp-74.

Belongs to the TrpA family. As to quaternary structure, tetramer of two alpha and two beta chains.

The catalysed reaction is (1S,2R)-1-C-(indol-3-yl)glycerol 3-phosphate + L-serine = D-glyceraldehyde 3-phosphate + L-tryptophan + H2O. It functions in the pathway amino-acid biosynthesis; L-tryptophan biosynthesis; L-tryptophan from chorismate: step 5/5. Functionally, the alpha subunit is responsible for the aldol cleavage of indoleglycerol phosphate to indole and glyceraldehyde 3-phosphate. This chain is Tryptophan synthase alpha chain, found in Prochlorococcus marinus subsp. pastoris (strain CCMP1986 / NIES-2087 / MED4).